A 347-amino-acid polypeptide reads, in one-letter code: Probable arabinogalactan endo-beta-1,4-galactanase A (347 aa).

The signal sequence occupies residues 1 to 16; that stretch reads MLFSYLLATLPLLANA. Catalysis depends on Glu-150, which acts as the Proton donor. The active-site Nucleophile is Glu-260.

Belongs to the glycosyl hydrolase 53 family.

It localises to the secreted. It carries out the reaction The enzyme specifically hydrolyzes (1-&gt;4)-beta-D-galactosidic linkages in type I arabinogalactans.. Functionally, endogalactanase involved in the degradation of plant cell wall polysaccharides, and more particularly of hairy regions of pectin. The sequence is that of Probable arabinogalactan endo-beta-1,4-galactanase A (galA) from Aspergillus oryzae (strain ATCC 42149 / RIB 40) (Yellow koji mold).